Reading from the N-terminus, the 484-residue chain is Sucrose-6-phosphate hydrolase (484 aa).

Substrate is bound by residues 48–51, Gln-67, 110–111, 168–169, and Glu-223; these read LLND, YS, and RD. Residue Asp-51 is part of the active site.

This sequence belongs to the glycosyl hydrolase 32 family.

Its subcellular location is the cytoplasm. The catalysed reaction is Hydrolysis of terminal non-reducing beta-D-fructofuranoside residues in beta-D-fructofuranosides.. It functions in the pathway glycan biosynthesis; sucrose metabolism. In terms of biological role, enables the bacterium to metabolize sucrose as a sole carbon source. In Vibrio alginolyticus, this protein is Sucrose-6-phosphate hydrolase (scrB).